Reading from the N-terminus, the 57-residue chain is Orphan toxin OrtT (57 aa).

2 helical membrane passes run 6–26 (HMLVFYAVMAAIAFLITWFLS) and 34–54 (FLSAFLVGATWPMSFPVALLF).

The protein belongs to the GhoT/OrtT toxin family.

It is found in the cell inner membrane. Functionally, acts as an orphan toxin which is important for maintaining cell fitness during stress related to the stringent response. Increases the formation of persister cells. Has no known antitoxin. This chain is Orphan toxin OrtT, found in Escherichia coli O6:H1 (strain CFT073 / ATCC 700928 / UPEC).